A 517-amino-acid polypeptide reads, in one-letter code: ATP synthase subunit alpha 2 (517 aa).

173–180 (GDRQTGKT) is a binding site for ATP.

It belongs to the ATPase alpha/beta chains family. F-type ATPases have 2 components, CF(1) - the catalytic core - and CF(0) - the membrane proton channel. CF(1) has five subunits: alpha(3), beta(3), gamma(1), delta(1), epsilon(1). CF(0) has three main subunits: a(1), b(2) and c(9-12). The alpha and beta chains form an alternating ring which encloses part of the gamma chain. CF(1) is attached to CF(0) by a central stalk formed by the gamma and epsilon chains, while a peripheral stalk is formed by the delta and b chains.

Its subcellular location is the cell inner membrane. The catalysed reaction is ATP + H2O + 4 H(+)(in) = ADP + phosphate + 5 H(+)(out). Its function is as follows. Produces ATP from ADP in the presence of a proton gradient across the membrane. The alpha chain is a regulatory subunit. The chain is ATP synthase subunit alpha 2 from Legionella pneumophila (strain Corby).